The chain runs to 264 residues: Glutamate racemase (264 aa).

Substrate is bound by residues 10-11 (DS) and 42-43 (YG). Catalysis depends on Cys-73, which acts as the Proton donor/acceptor. A substrate-binding site is contributed by 74 to 75 (NT). Residue Cys-183 is the Proton donor/acceptor of the active site. A substrate-binding site is contributed by 184–185 (TH).

It belongs to the aspartate/glutamate racemases family.

It catalyses the reaction L-glutamate = D-glutamate. Its pathway is cell wall biogenesis; peptidoglycan biosynthesis. Functionally, provides the (R)-glutamate required for cell wall biosynthesis. This is Glutamate racemase from Streptococcus pyogenes serotype M6 (strain ATCC BAA-946 / MGAS10394).